The primary structure comprises 222 residues: Large ribosomal subunit protein uL3 (222 aa).

The disordered stretch occupies residues 129–150 (HNFRGLPDSHGTERKHRSPGSI).

This sequence belongs to the universal ribosomal protein uL3 family. As to quaternary structure, part of the 50S ribosomal subunit. Forms a cluster with proteins L14 and L19.

Functionally, one of the primary rRNA binding proteins, it binds directly near the 3'-end of the 23S rRNA, where it nucleates assembly of the 50S subunit. This Acidothermus cellulolyticus (strain ATCC 43068 / DSM 8971 / 11B) protein is Large ribosomal subunit protein uL3.